The primary structure comprises 379 residues: Cytochrome b (379 aa).

4 consecutive transmembrane segments (helical) span residues 34-54 (FGSL…LLAM), 78-99 (WLIR…YLHI), 114-134 (WNTG…GYVL), and 179-199 (FFAL…IHLT). Heme b is bound by residues H84 and H98. The heme b site is built by H183 and H197. Position 202 (H202) interacts with a ubiquinone. 4 consecutive transmembrane segments (helical) span residues 227-247 (LKDI…AFFS), 289-309 (LGGV…PFLH), 321-341 (LSQV…WIGS), and 348-368 (FIII…ILFP).

Belongs to the cytochrome b family. As to quaternary structure, the cytochrome bc1 complex contains 11 subunits: 3 respiratory subunits (MT-CYB, CYC1 and UQCRFS1), 2 core proteins (UQCRC1 and UQCRC2) and 6 low-molecular weight proteins (UQCRH/QCR6, UQCRB/QCR7, UQCRQ/QCR8, UQCR10/QCR9, UQCR11/QCR10 and a cleavage product of UQCRFS1). This cytochrome bc1 complex then forms a dimer. The cofactor is heme b.

It is found in the mitochondrion inner membrane. Component of the ubiquinol-cytochrome c reductase complex (complex III or cytochrome b-c1 complex) that is part of the mitochondrial respiratory chain. The b-c1 complex mediates electron transfer from ubiquinol to cytochrome c. Contributes to the generation of a proton gradient across the mitochondrial membrane that is then used for ATP synthesis. The protein is Cytochrome b (MT-CYB) of Casuarius bennetti (Dwarf cassowary).